The sequence spans 434 residues: Glutamate-1-semialdehyde 2,1-aminomutase 1 (434 aa).

Lys-270 is modified (N6-(pyridoxal phosphate)lysine).

It belongs to the class-III pyridoxal-phosphate-dependent aminotransferase family. HemL subfamily. As to quaternary structure, homodimer. Requires pyridoxal 5'-phosphate as cofactor.

The protein resides in the cytoplasm. The catalysed reaction is (S)-4-amino-5-oxopentanoate = 5-aminolevulinate. It functions in the pathway porphyrin-containing compound metabolism; protoporphyrin-IX biosynthesis; 5-aminolevulinate from L-glutamyl-tRNA(Glu): step 2/2. This is Glutamate-1-semialdehyde 2,1-aminomutase 1 from Bacillus thuringiensis subsp. konkukian (strain 97-27).